The chain runs to 346 residues: Tripartite motif-containing protein 44 (346 aa).

A disordered region spans residues 68–167; it reads TPPASGGDDA…ETEAESEFDP (100 aa). The span at 89-167 shows a compositional bias: acidic residues; the sequence is EGEVESEVGE…ETEAESEFDP (79 aa). The segment at 176–217 adopts a B box-type zinc-finger fold; the sequence is VAKRKCPDHGLDLSTYCQEDRQLICVLCPVIGAHRGHQLSTL. Cys181, His184, Cys203, and His209 together coordinate Zn(2+). Residues 292 to 327 are a coiled coil; sequence AHVTEILADIQSHMDRLMTQMAQAKEQLDTSNESAE. A disordered region spans residues 313-346; that stretch reads AQAKEQLDTSNESAEPKAEGDEEGPSGASEEEDT. The segment covering 332-346 has biased composition (acidic residues); the sequence is GDEEGPSGASEEEDT. Ser338 and Ser341 each carry phosphoserine.

Interacts (via coiled coil) with TRIM17 (via coiled coil). As to expression, expressed mainly in brain with high level in cerebral hemispheres and cerebellum. Lower expression in kidney, lung and spleen. In brain is detected in the hippocampus, thalamic and pretectal nuclei, substantia nigra, the dorsal part of the medulla, the cerebellum, in the olfactory nucleus, other cortical areas apart from hippocampus and the striatum. Indeed expression is confined in neuronal somata namely in the CA3 region and dentate gyrus of the hippocampus, caudate-putamen, parabranchial nucleus, olfactory nucleus, cortex, deep cerebellar nuclei and thalamus. Also highly expressed in the spleen. thymus and testis.

Its function is as follows. May play a role in the process of differentiation and maturation of neuronal cells. May regulate the activity of TRIM17. Is a negative regulator of PAX6 expression. The protein is Tripartite motif-containing protein 44 (Trim44) of Mus musculus (Mouse).